Here is a 211-residue protein sequence, read N- to C-terminus: Large ribosomal subunit protein uL3 (211 aa).

A disordered region spans residues 122–147; it reads AIKRHGQSRGPMAHGSRYHRRPGSMG.

This sequence belongs to the universal ribosomal protein uL3 family. In terms of assembly, part of the 50S ribosomal subunit. Forms a cluster with proteins L14 and L19.

Functionally, one of the primary rRNA binding proteins, it binds directly near the 3'-end of the 23S rRNA, where it nucleates assembly of the 50S subunit. This chain is Large ribosomal subunit protein uL3, found in Geobacillus sp. (strain WCH70).